Consider the following 353-residue polypeptide: MDLEASLLPTGPNASNTSDGPDNLTSAGSPPRTGSISYINIIMPSVFGTICLLGIIGNSTVIFAVVKKSKLHWCNNVPDIFIINLSVVDLLFLLGMPFMIHQLMGNGVWHFGETMCTLITAMDANSQFTSTYILTAMAIDRYLATVHPISSTKFRKPSVATLVICLLWALSFISITPVWLYARLIPFPGGAVGCGIRLPNPDTDLYWFTLYQFFLAFALPFVVITAAYVRILQRMTSSVAPASQRSIRLRTKRVTRTAIAICLVFFVCWAPYYVLQLTQLSISRPTLTFVYLYNAAISLGYANSCLNPFVYIVLCETFRKRLVLSVKPAAQGQLRAVSNAQTADEERTESKGT.

The disordered stretch occupies residues 1–29 (MDLEASLLPTGPNASNTSDGPDNLTSAGS). Residues 1-44 (MDLEASLLPTGPNASNTSDGPDNLTSAGSPPRTGSISYINIIMP) lie on the Extracellular side of the membrane. Polar residues predominate over residues 12–29 (PNASNTSDGPDNLTSAGS). N-linked (GlcNAc...) asparagine glycosylation is found at Asn13, Asn16, and Asn23. A helical transmembrane segment spans residues 45–67 (SVFGTICLLGIIGNSTVIFAVVK). The Cytoplasmic segment spans residues 68-79 (KSKLHWCNNVPD). A helical transmembrane segment spans residues 80–102 (IFIINLSVVDLLFLLGMPFMIHQ). At 103–116 (LMGNGVWHFGETMC) the chain is on the extracellular side. Cys116 and Cys194 form a disulfide bridge. Residues 117-139 (TLITAMDANSQFTSTYILTAMAI) form a helical membrane-spanning segment. At 140–158 (DRYLATVHPISSTKFRKPS) the chain is on the cytoplasmic side. A helical transmembrane segment spans residues 159–181 (VATLVICLLWALSFISITPVWLY). Residues 182-209 (ARLIPFPGGAVGCGIRLPNPDTDLYWFT) are Extracellular-facing. The helical transmembrane segment at 210 to 232 (LYQFFLAFALPFVVITAAYVRIL) threads the bilayer. The Cytoplasmic portion of the chain corresponds to 233–252 (QRMTSSVAPASQRSIRLRTK). The chain crosses the membrane as a helical span at residues 253–275 (RVTRTAIAICLVFFVCWAPYYVL). Topologically, residues 276–289 (QLTQLSISRPTLTF) are extracellular. The chain crosses the membrane as a helical span at residues 290-312 (VYLYNAAISLGYANSCLNPFVYI). Over 313–353 (VLCETFRKRLVLSVKPAAQGQLRAVSNAQTADEERTESKGT) the chain is Cytoplasmic.

This sequence belongs to the G-protein coupled receptor 1 family. Interacts with NCDN. In terms of tissue distribution, highest level in brain, particularly in the frontal cortex and hypothalamus, lower levels in the liver and heart.

It is found in the cell membrane. Its function is as follows. Receptor for melanin-concentrating hormone, coupled to both G proteins that inhibit adenylyl cyclase and G proteins that activate phosphoinositide hydrolysis. In Homo sapiens (Human), this protein is Melanin-concentrating hormone receptor 1.